Reading from the N-terminus, the 222-residue chain is Lipid A 4'-phosphatase (222 aa).

At 1–3 the chain is on the cytoplasmic side; that stretch reads MAR. A helical membrane pass occupies residues 4 to 24; that stretch reads FHIILGLVVCFFAWIFFLIFP. Over 25–58 the chain is Periplasmic; it reads NLDIQFAGHFYNSSAHQFIGGYDGFLGFLHWFAR. Residues 59–79 form a helical membrane-spanning segment; it reads FFPIFFSIIVILFLLGSLFID. Residues 80–87 are Cytoplasmic-facing; sequence KFKIKYRK. A helical membrane pass occupies residues 88–108; it reads AIFFIAVCLWIGPGLVVNYVF. Residues 109 to 144 are Periplasmic-facing; sequence KDHWGRPRPVMVEQFNGDKIFQPPFVISSQCDKNCS. A helical membrane pass occupies residues 145-165; sequence FVCGDASMGFWLFAFMPLLAT. Residues 166 to 169 are Cytoplasmic-facing; that stretch reads RKKK. Residues 170–190 traverse the membrane as a helical segment; it reads LVAFIAAVVAGGGLGLMRMSQ. Residues 191–193 are Periplasmic-facing; that stretch reads GGH. The chain crosses the membrane as a helical span at residues 194–214; sequence FFSDVVFCGIFVYISTWVVYA. At 215 to 222 the chain is on the cytoplasmic side; it reads LMYRKKEY.

This sequence belongs to the lipid A LpxF 4'-phosphatase family.

It is found in the cell inner membrane. The protein operates within bacterial outer membrane biogenesis; LPS lipid A biosynthesis. Removes the 4'-phosphate moiety from lipid IV(A) (a tetraacylated precursor of lipid A) and from pentaacylated lipid A, but not from hexaacylated lipid A (as is found in E.coli). Does not dephosphorylate phosphatidic acid, phosphatidylglycerophosphate, or the 1-phosphate group of lipid A and lipid A precursors. Its expression in E.coli confers resistance to the cationic antimicrobial peptide (CAMP) polymyxin B. Plays a critical role in the ability of the bacteria to avoid the host's innate immune system, especially the bactericidal action of CAMPs, although whether it is CAMP-sensitivity or increased sensitivity to the immune system is not clear. In Francisella tularensis subsp. novicida (strain U112), this protein is Lipid A 4'-phosphatase.